We begin with the raw amino-acid sequence, 443 residues long: Glucose-6-phosphate isomerase (443 aa).

Glu-285 acts as the Proton donor in catalysis. Catalysis depends on residues His-306 and Lys-420.

It belongs to the GPI family.

The protein localises to the cytoplasm. It catalyses the reaction alpha-D-glucose 6-phosphate = beta-D-fructose 6-phosphate. It functions in the pathway carbohydrate biosynthesis; gluconeogenesis. It participates in carbohydrate degradation; glycolysis; D-glyceraldehyde 3-phosphate and glycerone phosphate from D-glucose: step 2/4. Catalyzes the reversible isomerization of glucose-6-phosphate to fructose-6-phosphate. The chain is Glucose-6-phosphate isomerase from Staphylococcus aureus (strain USA300).